The chain runs to 782 residues: uncharacterized protein (782 aa).

3 disordered regions span residues 1-127, 205-234, and 308-355; these read MTTT…SAMK, NAAA…SYNP, and PYNF…SYLR. The span at 24 to 54 shows a compositional bias: basic and acidic residues; that stretch reads KPQEEPTMKDKALLFEKQRQEKKMKHTEAKM. Low complexity predominate over residues 82 to 118; the sequence is KNVNNATSTNNATSTKNNTKNTPKNTPKNIPKNTTAK. Positions 312–324 are enriched in polar residues; the sequence is ARNNHGSDVSSAM. The segment covering 326-336 has biased composition (basic and acidic residues); the sequence is NARRQASETRR. The span at 337–346 shows a compositional bias: polar residues; sequence SNLSSYNDRN. Residues 361–628 are a coiled coil; it reads MEKIRTEVDK…ERLRERLREL (268 aa). The segment covering 629–668 has biased composition (basic and acidic residues); that stretch reads GSRDRSYNRSSRDRSHDRLYERSPRSRDRSSRDRSRDRYS. Positions 629-689 are disordered; sequence GSRDRSYNRS…SDSVKDYSVG (61 aa). Residues 669–678 show a composition bias toward basic residues; sequence RSRSRSRYRR. Over residues 679–689 the composition is skewed to basic and acidic residues; the sequence is RSDSVKDYSVG.

This is an uncharacterized protein from Yarrowia lipolytica (strain CLIB 122 / E 150) (Yeast).